Reading from the N-terminus, the 82-residue chain is Small ribosomal subunit protein bS16 (82 aa).

Belongs to the bacterial ribosomal protein bS16 family.

This Actinobacillus succinogenes (strain ATCC 55618 / DSM 22257 / CCUG 43843 / 130Z) protein is Small ribosomal subunit protein bS16.